The chain runs to 224 residues: Type II restriction enzyme BstVI (224 aa).

This sequence belongs to the XhoI type II restriction endonuclease family.

It carries out the reaction Endonucleolytic cleavage of DNA to give specific double-stranded fragments with terminal 5'-phosphates.. Its function is as follows. A P subtype restriction enzyme that recognizes the double-stranded sequence 5'-CTCGAG-3' and cleaves after C-1. The chain is Type II restriction enzyme BstVI from Geobacillus stearothermophilus (Bacillus stearothermophilus).